We begin with the raw amino-acid sequence, 337 residues long: Putative 4-hydroxythreonine-4-phosphate dehydrogenase 2 (337 aa).

3 residues coordinate a divalent metal cation: His173, His217, and His274.

It belongs to the PdxA family. Homodimer. Requires Zn(2+) as cofactor. Mg(2+) serves as cofactor. Co(2+) is required as a cofactor.

It is found in the cytoplasm. The enzyme catalyses 4-(phosphooxy)-L-threonine + NAD(+) = 3-amino-2-oxopropyl phosphate + CO2 + NADH. It participates in cofactor biosynthesis; pyridoxine 5'-phosphate biosynthesis; pyridoxine 5'-phosphate from D-erythrose 4-phosphate: step 4/5. In terms of biological role, catalyzes the NAD(P)-dependent oxidation of 4-(phosphooxy)-L-threonine (HTP) into 2-amino-3-oxo-4-(phosphooxy)butyric acid which spontaneously decarboxylates to form 3-amino-2-oxopropyl phosphate (AHAP). The polypeptide is Putative 4-hydroxythreonine-4-phosphate dehydrogenase 2 (Pseudomonas aeruginosa (strain ATCC 15692 / DSM 22644 / CIP 104116 / JCM 14847 / LMG 12228 / 1C / PRS 101 / PAO1)).